The following is a 124-amino-acid chain: Heat-labile enterotoxin B chain (124 aa).

The signal sequence occupies residues 1–21; that stretch reads MNKVKCYVLFTALLSSLCAYG. C30 and C107 are oxidised to a cystine.

Heterohexamer of one A chain and of five B chains.

In terms of biological role, the biological activity of the toxin is produced by the A chain, which activates intracellular adenyl cyclase. The sequence is that of Heat-labile enterotoxin B chain (eltB) from Escherichia coli O78:H11 (strain H10407 / ETEC).